The chain runs to 153 residues: Ribosome maturation factor RimP (153 aa).

This sequence belongs to the RimP family.

Its subcellular location is the cytoplasm. Functionally, required for maturation of 30S ribosomal subunits. This Histophilus somni (strain 2336) (Haemophilus somnus) protein is Ribosome maturation factor RimP.